The chain runs to 632 residues: MAU2 chromatid cohesion factor homolog (632 aa).

TPR repeat units lie at residues 453–486 (GGFYYVQGLHAFHKNSFHEAKRFLRETLKMANAE) and 493–526 (SCSLVLLSHVFLSIGNSKESMNMVTPAMQLASKI).

This sequence belongs to the SCC4/mau-2 family. In terms of assembly, interacts with Nipped-B to form the cohesin loading complex.

The protein resides in the nucleus. It localises to the nucleoplasm. Its function is as follows. Required for association of the cohesin complex with chromatin during interphase. Plays a role in sister chromatid cohesion and normal progression through prometaphase. The protein is MAU2 chromatid cohesion factor homolog of Drosophila sechellia (Fruit fly).